The sequence spans 108 residues: Thiosulfate sulfurtransferase GlpE (108 aa).

The region spanning 18 to 106 is the Rhodanese domain; that stretch reads ENEGATLADI…WERSGLPIET (89 aa). The Cysteine persulfide intermediate role is filled by C66.

This sequence belongs to the GlpE family.

Its subcellular location is the cytoplasm. The catalysed reaction is thiosulfate + hydrogen cyanide = thiocyanate + sulfite + 2 H(+). It carries out the reaction thiosulfate + [thioredoxin]-dithiol = [thioredoxin]-disulfide + hydrogen sulfide + sulfite + 2 H(+). Functionally, transferase that catalyzes the transfer of sulfur from thiosulfate to thiophilic acceptors such as cyanide or dithiols. May function in a CysM-independent thiosulfate assimilation pathway by catalyzing the conversion of thiosulfate to sulfite, which can then be used for L-cysteine biosynthesis. The protein is Thiosulfate sulfurtransferase GlpE of Actinobacillus pleuropneumoniae serotype 5b (strain L20).